Here is a 660-residue protein sequence, read N- to C-terminus: Bifunctional polymyxin resistance protein ArnA (660 aa).

The tract at residues 1-304 (MKTVVFAYHD…TLGLVQGSRL (304 aa)) is formyltransferase ArnAFT. A (6R)-10-formyltetrahydrofolate-binding site is contributed by 86 to 88 (HLI). The active-site Proton donor; for formyltransferase activity is the histidine 104. Residues arginine 114 and 136–140 (VKRAD) contribute to the (6R)-10-formyltetrahydrofolate site. The interval 314-660 (RRTRVLILGV…RTVDLTDKPS (347 aa)) is dehydrogenase ArnADH. NAD(+) contacts are provided by residues aspartate 347 and 368–369 (DI). Residues alanine 393, tyrosine 398, and 432–433 (TS) each bind UDP-alpha-D-glucuronate. The active-site Proton acceptor; for decarboxylase activity is glutamate 434. UDP-alpha-D-glucuronate-binding positions include arginine 460, asparagine 492, 526 to 535 (KLIDGGKQKR), and tyrosine 613. Arginine 619 acts as the Proton donor; for decarboxylase activity in catalysis.

This sequence in the N-terminal section; belongs to the Fmt family. UDP-L-Ara4N formyltransferase subfamily. The protein in the C-terminal section; belongs to the NAD(P)-dependent epimerase/dehydratase family. UDP-glucuronic acid decarboxylase subfamily. Homohexamer, formed by a dimer of trimers.

The catalysed reaction is UDP-alpha-D-glucuronate + NAD(+) = UDP-beta-L-threo-pentopyranos-4-ulose + CO2 + NADH. It catalyses the reaction UDP-4-amino-4-deoxy-beta-L-arabinose + (6R)-10-formyltetrahydrofolate = UDP-4-deoxy-4-formamido-beta-L-arabinose + (6S)-5,6,7,8-tetrahydrofolate + H(+). Its pathway is nucleotide-sugar biosynthesis; UDP-4-deoxy-4-formamido-beta-L-arabinose biosynthesis; UDP-4-deoxy-4-formamido-beta-L-arabinose from UDP-alpha-D-glucuronate: step 1/3. It functions in the pathway nucleotide-sugar biosynthesis; UDP-4-deoxy-4-formamido-beta-L-arabinose biosynthesis; UDP-4-deoxy-4-formamido-beta-L-arabinose from UDP-alpha-D-glucuronate: step 3/3. It participates in bacterial outer membrane biogenesis; lipopolysaccharide biosynthesis. In terms of biological role, bifunctional enzyme that catalyzes the oxidative decarboxylation of UDP-glucuronic acid (UDP-GlcUA) to UDP-4-keto-arabinose (UDP-Ara4O) and the addition of a formyl group to UDP-4-amino-4-deoxy-L-arabinose (UDP-L-Ara4N) to form UDP-L-4-formamido-arabinose (UDP-L-Ara4FN). The modified arabinose is attached to lipid A and is required for resistance to polymyxin and cationic antimicrobial peptides. The polypeptide is Bifunctional polymyxin resistance protein ArnA (Escherichia coli O9:H4 (strain HS)).